The sequence spans 144 residues: Austinoid biosynthesis cluster protein S (144 aa).

Belongs to the trt14 isomerase family. As to quaternary structure, homodimer.

It participates in secondary metabolite biosynthesis; terpenoid biosynthesis. Part of the gene cluster that mediates the biosynthesis of calidodehydroaustin, a fungal meroterpenoid. The first step of the pathway is the synthesis of 3,5-dimethylorsellinic acid by the polyketide synthase ausA. 3,5-dimethylorsellinic acid is then prenylated by the polyprenyl transferase ausN. Further epoxidation by the FAD-dependent monooxygenase ausM and cyclization by the probable terpene cyclase ausL lead to the formation of protoaustinoid A. Protoaustinoid A is then oxidized to spiro-lactone preaustinoid A3 by the combined action of the FAD-binding monooxygenases ausB and ausC, and the dioxygenase ausE. Acid-catalyzed keto-rearrangement and ring contraction of the tetraketide portion of preaustinoid A3 by ausJ lead to the formation of preaustinoid A4. The aldo-keto reductase ausK, with the help of ausH, is involved in the next step by transforming preaustinoid A4 into isoaustinone which is in turn hydroxylated by the P450 monooxygenase ausI to form austinolide. The cytochrome P450 monooxygenase ausG modifies austinolide to austinol. Austinol is further acetylated to austin by the O-acetyltransferase ausP, which spontaneously changes to dehydroaustin. The cytochrome P450 monooxygenase ausR then converts dehydroaustin is into 7-dehydrodehydroaustin. The hydroxylation catalyzed by ausR permits the O-acetyltransferase ausQ to add an additional acetyl group to the molecule, leading to the formation of acetoxydehydroaustin. The short chain dehydrogenase ausT catalyzes the reduction of the double bond present between carbon atoms 1 and 2 to convert 7-dehydrodehydroaustin into 1,2-dihydro-7-hydroxydehydroaustin. AusQ catalyzes not only an acetylation reaction but also the addition of the PKS ausV diketide product to 1,2-dihydro-7-hydroxydehydroaustin, forming precalidodehydroaustin. Finally, the iron/alpha-ketoglutarate-dependent dioxygenase converts precalidodehydroaustin into calidodehydroaustin. AusS is necessary for austinoids production and may play a possible function as a regulator. Functionally, may play a possible function as a regulator. The chain is Austinoid biosynthesis cluster protein S from Aspergillus calidoustus.